The following is a 180-amino-acid chain: Crossover junction endodeoxyribonuclease RuvC (180 aa).

Catalysis depends on residues Asp-7, Glu-66, and Asp-138. Mg(2+)-binding residues include Asp-7, Glu-66, and Asp-138.

Belongs to the RuvC family. In terms of assembly, homodimer which binds Holliday junction (HJ) DNA. The HJ becomes 2-fold symmetrical on binding to RuvC with unstacked arms; it has a different conformation from HJ DNA in complex with RuvA. In the full resolvosome a probable DNA-RuvA(4)-RuvB(12)-RuvC(2) complex forms which resolves the HJ. It depends on Mg(2+) as a cofactor.

Its subcellular location is the cytoplasm. It carries out the reaction Endonucleolytic cleavage at a junction such as a reciprocal single-stranded crossover between two homologous DNA duplexes (Holliday junction).. In terms of biological role, the RuvA-RuvB-RuvC complex processes Holliday junction (HJ) DNA during genetic recombination and DNA repair. Endonuclease that resolves HJ intermediates. Cleaves cruciform DNA by making single-stranded nicks across the HJ at symmetrical positions within the homologous arms, yielding a 5'-phosphate and a 3'-hydroxyl group; requires a central core of homology in the junction. The consensus cleavage sequence is 5'-(A/T)TT(C/G)-3'. Cleavage occurs on the 3'-side of the TT dinucleotide at the point of strand exchange. HJ branch migration catalyzed by RuvA-RuvB allows RuvC to scan DNA until it finds its consensus sequence, where it cleaves and resolves the cruciform DNA. In Burkholderia lata (strain ATCC 17760 / DSM 23089 / LMG 22485 / NCIMB 9086 / R18194 / 383), this protein is Crossover junction endodeoxyribonuclease RuvC.